The sequence spans 273 residues: Probable ribosomal RNA small subunit methyltransferase A (273 aa).

Residues Asn23, Leu25, Gly50, Glu71, Asp95, and Asn110 each coordinate S-adenosyl-L-methionine.

The protein belongs to the class I-like SAM-binding methyltransferase superfamily. rRNA adenine N(6)-methyltransferase family. RsmA subfamily.

The protein localises to the cytoplasm. Specifically dimethylates two adjacent adenosines in the loop of a conserved hairpin near the 3'-end of 16S rRNA in the 30S particle. May play a critical role in biogenesis of 30S subunits. In Thermococcus sibiricus (strain DSM 12597 / MM 739), this protein is Probable ribosomal RNA small subunit methyltransferase A.